The primary structure comprises 157 residues: NudC domain-containing protein 2 (157 aa).

Ser2 is subject to N-acetylserine. A CS domain is found at 14–104 (CGTPWGQWYQ…DAANCWTSLL (91 aa)). Residues 134–157 (FDFSGAEISGNYTKGGPDFSNLEK) are disordered. Phosphoserine is present on Ser142. Tyr145 carries the post-translational modification Phosphotyrosine.

In terms of assembly, interacts with LIS1.

Its subcellular location is the chromosome. The protein localises to the centromere. It localises to the kinetochore. It is found in the cytoplasm. The protein resides in the cytoskeleton. Its subcellular location is the microtubule organizing center. The protein localises to the centrosome. It localises to the spindle pole. In terms of biological role, may regulate the LIS1/dynein pathway by stabilizing LIS1 with Hsp90 chaperone. In Homo sapiens (Human), this protein is NudC domain-containing protein 2 (NUDCD2).